A 128-amino-acid chain; its full sequence is Small ribosomal subunit protein uS11 (128 aa).

The protein belongs to the universal ribosomal protein uS11 family. In terms of assembly, part of the 30S ribosomal subunit. Interacts with proteins S7 and S18. Binds to IF-3.

Functionally, located on the platform of the 30S subunit, it bridges several disparate RNA helices of the 16S rRNA. Forms part of the Shine-Dalgarno cleft in the 70S ribosome. The chain is Small ribosomal subunit protein uS11 from Desulfosudis oleivorans (strain DSM 6200 / JCM 39069 / Hxd3) (Desulfococcus oleovorans).